The chain runs to 447 residues: Rab GDP dissociation inhibitor alpha (447 aa).

A Phosphoserine modification is found at Ser-427.

It belongs to the Rab GDI family. In terms of assembly, interacts with RHOH. Interacts with the non-phosphorylated forms of RAB1A, RAB3A, RAB5A, RAB5B, RAB5C, RAB8A, RAB8B, RAB10, RAB12, RAB35, and RAB43. In terms of tissue distribution, high expression in brain, lower in other tissues.

It localises to the cytoplasm. The protein resides in the golgi apparatus. It is found in the trans-Golgi network. In terms of biological role, regulates the GDP/GTP exchange reaction of most Rab proteins by inhibiting the dissociation of GDP from them, and the subsequent binding of GTP to them. Promotes the dissociation of GDP-bound Rab proteins from the membrane and inhibits their activation. Promotes the dissociation of RAB1A, RAB3A, RAB5A and RAB10 from membranes. This chain is Rab GDP dissociation inhibitor alpha (Gdi1), found in Rattus norvegicus (Rat).